Reading from the N-terminus, the 353-residue chain is MESEGWPALQPLLCFAWIAATLPIIAAALPIPTAVGGHLLRRLLSAFSSRGKTVRPSPASSSGSSSSKAKFTVPQKYFMHFYVVGVLATTILLLAIWFYAYMKLTPLLLESSSYSTIFSHLVGSNSFSFGRVRSRTMGHKYRVWRTVFALLLMEVQVLRRLYETEHVFHYSPARMHIVGYLTGLFYYVAAPLSLASSCIPEAAEYFQGQVPEFVVKGRARMPDLVIDSSSLLQPLLKLGWTQWIGAVIFIWGSLHQIRCHAILGSLREHKDYDEYVIPCGDCFNRVSCPHYLAELVIYFGMLVASGAEDIPVWFLFIFVITNLSFAAVETYNWYLQKFEDYPRSRYAIIPFVC.

The next 6 membrane-spanning stretches (helical) occupy residues 11 to 31, 78 to 98, 175 to 195, 234 to 254, 291 to 308, and 313 to 335; these read PLLC…ALPI, FMHF…AIWF, MHIV…LSLA, PLLK…WGSL, YLAE…SGAE, and WFLF…NWYL.

It belongs to the steroid 5-alpha reductase family. Polyprenal reductase subfamily.

Its subcellular location is the cell membrane. It carries out the reaction a di-trans,poly-cis-dolichal + NADP(+) = a di-trans,poly-cis-polyprenal + NADPH + H(+). The protein operates within protein modification; protein glycosylation. Plays a key role in early steps of protein N-linked glycosylation by being involved in the conversion of polyprenol into dolichol. Acts as a polyprenal reductase that mediates the reduction of polyprenal into dolichal in a NADP-dependent mechanism. Dolichols are required for the synthesis of dolichol-linked monosaccharides and the oligosaccharide precursor used for N-glycosylation. The polypeptide is Polyprenal reductase 2 (Oryza sativa subsp. japonica (Rice)).